A 418-amino-acid polypeptide reads, in one-letter code: Light-independent protochlorophyllide reductase subunit N (418 aa).

[4Fe-4S] cluster contacts are provided by Cys17, Cys42, and Cys103.

This sequence belongs to the BchN/ChlN family. As to quaternary structure, protochlorophyllide reductase is composed of three subunits; ChlL, ChlN and ChlB. Forms a heterotetramer of two ChlB and two ChlN subunits. [4Fe-4S] cluster serves as cofactor.

It catalyses the reaction chlorophyllide a + oxidized 2[4Fe-4S]-[ferredoxin] + 2 ADP + 2 phosphate = protochlorophyllide a + reduced 2[4Fe-4S]-[ferredoxin] + 2 ATP + 2 H2O. It functions in the pathway porphyrin-containing compound metabolism; chlorophyll biosynthesis (light-independent). Component of the dark-operative protochlorophyllide reductase (DPOR) that uses Mg-ATP and reduced ferredoxin to reduce ring D of protochlorophyllide (Pchlide) to form chlorophyllide a (Chlide). This reaction is light-independent. The NB-protein (ChlN-ChlB) is the catalytic component of the complex. The sequence is that of Light-independent protochlorophyllide reductase subunit N from Prochlorococcus marinus (strain MIT 9211).